Here is a 360-residue protein sequence, read N- to C-terminus: Capsular polysaccharide phosphotransferase LcbA (360 aa).

The protein belongs to the stealth family.

Its function is as follows. Part of a group II capsule biosynthesis locus. This is Capsular polysaccharide phosphotransferase LcbA (lcbA) from Aeromonas hydrophila.